The primary structure comprises 874 residues: Probable inorganic carbon transporter subunit DabA (874 aa).

Residues Cys-398, Asp-400, His-580, and Cys-595 each coordinate Zn(2+).

The protein belongs to the inorganic carbon transporter (TC 9.A.2) DabA family. Forms a complex with DabB. Zn(2+) is required as a cofactor.

It is found in the cell membrane. Its function is as follows. Part of an energy-coupled inorganic carbon pump. The sequence is that of Probable inorganic carbon transporter subunit DabA from Bacillus anthracis (strain A0248).